A 209-amino-acid chain; its full sequence is tRNA (guanine-N(7)-)-methyltransferase (209 aa).

S-adenosyl-L-methionine is bound by residues Asp35, Glu60, Asn87, and Asp113. Asp113 is an active-site residue. Substrate-binding residues include Lys117 and Asp149.

It belongs to the class I-like SAM-binding methyltransferase superfamily. TrmB family.

The catalysed reaction is guanosine(46) in tRNA + S-adenosyl-L-methionine = N(7)-methylguanosine(46) in tRNA + S-adenosyl-L-homocysteine. Its pathway is tRNA modification; N(7)-methylguanine-tRNA biosynthesis. Its function is as follows. Catalyzes the formation of N(7)-methylguanine at position 46 (m7G46) in tRNA. In Prochlorococcus marinus (strain MIT 9215), this protein is tRNA (guanine-N(7)-)-methyltransferase.